Consider the following 175-residue polypeptide: MNYFQLFNIEVSFDVDLQQLSSSYQTLQKTVHPDKFAHASEQEQRIAVQKSAQINDAYQTLKNPLQRAEYILVQRSVEMPNEQHSFQDTSFLMRQMELREMLEDVRHSGDVDAALLEVQSVLSTEYLQLSQVMRTQISENNAASNSAACDNLRKLKFYQKLNIEVDRLEDSLFDD.

One can recognise a J domain in the interval 2 to 74; it reads NYFQLFNIEV…LQRAEYILVQ (73 aa).

The protein belongs to the HscB family. As to quaternary structure, interacts with HscA and stimulates its ATPase activity.

Its function is as follows. Co-chaperone involved in the maturation of iron-sulfur cluster-containing proteins. Seems to help targeting proteins to be folded toward HscA. The sequence is that of Co-chaperone protein HscB homolog from Colwellia psychrerythraea (strain 34H / ATCC BAA-681) (Vibrio psychroerythus).